The chain runs to 424 residues: Serine--tRNA ligase (424 aa).

Residue 230-232 (TAE) participates in L-serine binding. 261–263 (RSE) contributes to the ATP binding site. Residue Glu-284 participates in L-serine binding. 348 to 351 (EISS) lines the ATP pocket. Ser-384 serves as a coordination point for L-serine.

This sequence belongs to the class-II aminoacyl-tRNA synthetase family. Type-1 seryl-tRNA synthetase subfamily. As to quaternary structure, homodimer. The tRNA molecule binds across the dimer.

It localises to the cytoplasm. It catalyses the reaction tRNA(Ser) + L-serine + ATP = L-seryl-tRNA(Ser) + AMP + diphosphate + H(+). It carries out the reaction tRNA(Sec) + L-serine + ATP = L-seryl-tRNA(Sec) + AMP + diphosphate + H(+). It participates in aminoacyl-tRNA biosynthesis; selenocysteinyl-tRNA(Sec) biosynthesis; L-seryl-tRNA(Sec) from L-serine and tRNA(Sec): step 1/1. Functionally, catalyzes the attachment of serine to tRNA(Ser). Is also able to aminoacylate tRNA(Sec) with serine, to form the misacylated tRNA L-seryl-tRNA(Sec), which will be further converted into selenocysteinyl-tRNA(Sec). The polypeptide is Serine--tRNA ligase (Streptococcus pneumoniae (strain 70585)).